The chain runs to 927 residues: Alpha-catenin-like protein hmp-1 (927 aa).

Coiled coils occupy residues 319–354 (TREN…RRDD) and 672–696 (QENQ…QIDI). Positions 901-927 (RNEIETGRDSDDEELDRRHQQRINGRL) are disordered.

The protein belongs to the vinculin/alpha-catenin family. As to quaternary structure, component of a core catenin-cadherin complex consisting of hmr-1, hmp-1 and hmp-2; the complex localizes to adherens junctions. May interact with hmp-2. In terms of tissue distribution, epidermal cells.

It localises to the cell junction. The protein localises to the adherens junction. Its subcellular location is the cytoplasm. Required for cell migration during body enclosure and cell shape changes during body elongation. Required for proper localization of other junctional components, such as pac-1. The polypeptide is Alpha-catenin-like protein hmp-1 (hmp-1) (Caenorhabditis elegans).